A 369-amino-acid polypeptide reads, in one-letter code: Tyrosyl-DNA phosphodiesterase 2 (369 aa).

Residues 1 to 17 show a composition bias toward basic and acidic residues; the sequence is MELEARAEPRSPRAGRG. Disordered stretches follow at residues 1–26 and 80–117; these read MELE…EDEE and AAAA…QQDD. Low complexity predominate over residues 99 to 112; it reads DDTASNTSSSGADS. The segment at 127–131 is interaction with 5' end of substrate DNA; it reads NIDGL. Mg(2+) is bound by residues Asp129 and Glu159. The interval 233–238 is interaction with 5' end of substrate DNA; the sequence is HLESTR. The Proton donor/acceptor role is filled by Asp269. Positions 271–273 are interaction with 5' end of substrate DNA; it reads NLR.

This sequence belongs to the CCR4/nocturin family. TTRAP/TDP2 subfamily. Mg(2+) is required as a cofactor. The cofactor is Mn(2+).

It localises to the nucleus. Its subcellular location is the PML body. In terms of biological role, DNA repair enzyme that can remove a variety of covalent adducts from DNA through hydrolysis of a 5'-phosphodiester bond, giving rise to DNA with a free 5' phosphate. Catalyzes the hydrolysis of dead-end complexes between DNA and the topoisomerase 2 (TOP2) active site tyrosine residue. Hydrolyzes 5'-phosphoglycolates on protruding 5' ends on DNA double-strand breaks (DSBs) due to DNA damage by radiation and free radicals. The 5'-tyrosyl DNA phosphodiesterase activity can enable the repair of TOP2-induced DSBs without the need for nuclease activity, creating a 'clean' DSB with 5'-phosphate termini that are ready for ligation. Also has 3'-tyrosyl DNA phosphodiesterase activity, but less efficiently and much slower than TDP1. This is Tyrosyl-DNA phosphodiesterase 2 (TDP2) from Gallus gallus (Chicken).